A 129-amino-acid polypeptide reads, in one-letter code: UPF0225 protein XC_4246 (129 aa).

Belongs to the UPF0225 family.

The polypeptide is UPF0225 protein XC_4246 (Xanthomonas campestris pv. campestris (strain 8004)).